The following is a 203-amino-acid chain: MSRYTGPSWKRSRRLGISLSGTGKELARRSYIPGQHGPNHRGRLSEYGMQLQEKQKLRWMFGLNERQFRTLFARAGKIREGQHGTNFMILLERRLDNVVYRLGLATTREQARQLVNHGHITVDGKRVDIPSYEVKVGQTISLKEKSKNLQQVKDALEAVASRPSFVSFDEDKMEGQLVRFPERDEMEPEIDEALVVEYYNKLL.

The S4 RNA-binding domain occupies 93-153; it reads RRLDNVVYRL…EKSKNLQQVK (61 aa).

The protein belongs to the universal ribosomal protein uS4 family. As to quaternary structure, part of the 30S ribosomal subunit. Contacts protein S5. The interaction surface between S4 and S5 is involved in control of translational fidelity.

Its function is as follows. One of the primary rRNA binding proteins, it binds directly to 16S rRNA where it nucleates assembly of the body of the 30S subunit. With S5 and S12 plays an important role in translational accuracy. In Lactobacillus delbrueckii subsp. bulgaricus (strain ATCC 11842 / DSM 20081 / BCRC 10696 / JCM 1002 / NBRC 13953 / NCIMB 11778 / NCTC 12712 / WDCM 00102 / Lb 14), this protein is Small ribosomal subunit protein uS4.